A 167-amino-acid polypeptide reads, in one-letter code: Transcription factor 24 (167 aa).

Residues 1 to 23 (MDRGRPAGSPLSASAEPAPLAAA) show a composition bias toward low complexity. Residues 1–60 (MDRGRPAGSPLSASAEPAPLAAAIRDSRPGRTGPGPAGPGGGSRSGSGRPAAANAARERS) are disordered. A compositionally biased stretch (gly residues) spans 32-45 (TGPGPAGPGGGSRS). A compositionally biased stretch (low complexity) spans 46-55 (GSGRPAAANA). The bHLH domain occupies 49 to 101 (RPAAANAARERSRVQTLRHAFLELQRTLPSVPPDTKLSKLDVLLLATTYIAHL).

As to quaternary structure, efficient DNA binding requires dimerization with another bHLH protein.

It localises to the nucleus. Functionally, putative transcription factor. The sequence is that of Transcription factor 24 (TCF24) from Homo sapiens (Human).